The primary structure comprises 155 residues: Putative pre-16S rRNA nuclease (155 aa).

The protein belongs to the YqgF nuclease family.

The protein resides in the cytoplasm. Could be a nuclease involved in processing of the 5'-end of pre-16S rRNA. This chain is Putative pre-16S rRNA nuclease, found in Novosphingobium aromaticivorans (strain ATCC 700278 / DSM 12444 / CCUG 56034 / CIP 105152 / NBRC 16084 / F199).